Reading from the N-terminus, the 211-residue chain is Outer-membrane lipoprotein carrier protein (211 aa).

The signal sequence occupies residues 1–25; it reads MRAIRMLLVSALTLGSLSATLSAHA.

Belongs to the LolA family. As to quaternary structure, monomer.

It is found in the periplasm. Participates in the translocation of lipoproteins from the inner membrane to the outer membrane. Only forms a complex with a lipoprotein if the residue after the N-terminal Cys is not an aspartate (The Asp acts as a targeting signal to indicate that the lipoprotein should stay in the inner membrane). In Pseudomonas putida (strain W619), this protein is Outer-membrane lipoprotein carrier protein.